Reading from the N-terminus, the 127-residue chain is Glycine cleavage system H protein (127 aa).

The Lipoyl-binding domain maps to T22–E104. K63 is modified (N6-lipoyllysine).

The protein belongs to the GcvH family. The glycine cleavage system is composed of four proteins: P, T, L and H. (R)-lipoate serves as cofactor.

Its function is as follows. The glycine cleavage system catalyzes the degradation of glycine. The H protein shuttles the methylamine group of glycine from the P protein to the T protein. In terms of biological role, is also involved in protein lipoylation via its role as an octanoyl/lipoyl carrier protein intermediate. The chain is Glycine cleavage system H protein from Anoxybacillus flavithermus (strain DSM 21510 / WK1).